Consider the following 72-residue polypeptide: Heat-stable enterotoxin C (72 aa).

Residues 1 to 19 (MKKIVFVLTLMLFSFGTLG) form the signal peptide. 3 cysteine pairs are disulfide-bonded: C60–C65, C61–C69, and C64–C72.

Belongs to the heat-stable enterotoxin family.

Its subcellular location is the secreted. Its function is as follows. Toxin which activates the particulate form of guanylate cyclase and increases cyclic GMP levels within the host intestinal epithelial cells. Highly toxic. The protein is Heat-stable enterotoxin C (ystC) of Yersinia enterocolitica.